A 518-amino-acid polypeptide reads, in one-letter code: Flagellin (518 aa).

The protein belongs to the bacterial flagellin family.

The protein resides in the secreted. The protein localises to the bacterial flagellum. Its function is as follows. Flagellin is the subunit protein which polymerizes to form the filaments of bacterial flagella. This chain is Flagellin (flaA), found in Aquifex aeolicus (strain VF5).